The primary structure comprises 161 residues: UPF0506 protein SJCHGC02965 (161 aa).

The N-terminal stretch at Gln-1–Ser-13 is a signal peptide. 9 N-linked (GlcNAc...) asparagine glycosylation sites follow: Asn-15, Asn-19, Asn-31, Asn-43, Asn-47, Asn-59, Asn-63, Asn-75, and Asn-121. 3 disulfide bridges follow: Cys-127/Cys-141, Cys-134/Cys-145, and Cys-140/Cys-150.

The protein belongs to the UPF0506 family.

It is found in the secreted. In Schistosoma japonicum (Blood fluke), this protein is UPF0506 protein SJCHGC02965.